The sequence spans 531 residues: High affinity cysteine transporter (531 aa).

The Cytoplasmic portion of the chain corresponds to 1 to 54; that stretch reads MSKVDVKIGADSISSSDEILVPSRLADVTLAFMEENDAAVPEITPEQEKKLKRK. A helical transmembrane segment spans residues 55-75; the sequence is LFLTIFTFVSAINLLLYMDKA. Over 76–97 the chain is Lumenal; sequence TLSYDSILGFFEDTGLTQNTYN. A helical transmembrane segment spans residues 98–118; it reads TVNTLFYVGFAIGQFPGQYLA. Residues 119–120 are Cytoplasmic-facing; it reads QK. Residues 121–141 traverse the membrane as a helical segment; sequence LPLGKFLGGLLATWTILIFLS. Topologically, residues 142–154 are lumenal; the sequence is CTAYNFSGVVALR. The N-linked (GlcNAc...) asparagine glycan is linked to asparagine 146. A helical membrane pass occupies residues 155 to 175; the sequence is FFLGLTESVVIPILITTMGMF. Residues 176–186 are Cytoplasmic-facing; the sequence is FDASERAAAQP. A helical membrane pass occupies residues 187-207; it reads FFFAACMGSPIPTGFIAYGVL. Residues 208 to 218 lie on the Lumenal side of the membrane; it reads HITNPSISLWK. The helical transmembrane segment at 219 to 239 threads the bilayer; the sequence is IFTIIIGGLTFIMTVVVILWF. At 240–285 the chain is on the cytoplasmic side; that stretch reads PNNPADVKFFSIQERVWIIRRVQASTGSSIEQKVFKKSQFREAMKD. A helical transmembrane segment spans residues 286–306; the sequence is YITWLFGLFFLLQQLANNLPY. Residues 307-324 are Lumenal-facing; that stretch reads QQNLLFEGMGGVDALGST. Residues 325-345 traverse the membrane as a helical segment; it reads LVSVAGAGFAVVCAFIATLML. Over 346–352 the chain is Cytoplasmic; it reads AKWKNIS. A helical membrane pass occupies residues 353–373; the sequence is ALTAIFWTLPALVGSIAAAAL. Over 374–378 the chain is Lumenal; it reads PWDNK. Residues 379–399 traverse the membrane as a helical segment; the sequence is IGILANICMAGQIFGIPFIIA. Topologically, residues 400–413 are cytoplasmic; the sequence is LSWASSSASGYTKK. A helical transmembrane segment spans residues 414 to 436; it reads LTRSSVSLFAMGIANIISPQIWR. Residues 437-447 are Lumenal-facing; sequence EKDSPRFLPAW. The helical transmembrane segment at 448 to 468 threads the bilayer; that stretch reads IVQIVLSFSLAPAILLLIHFI. Positions 469–498 form a coiled coil; sequence LKRRNNQRLKNYDENLQNYLDRIQLIESEN. Over 469 to 531 the chain is Cytoplasmic; it reads LKRRNNQRLK…LENETFIYPL (63 aa). Phosphoserine is present on residues serine 500 and serine 501.

The protein belongs to the major facilitator superfamily. Allantoate permease family.

Its subcellular location is the cell membrane. It is found in the endoplasmic reticulum membrane. High affinity cysteine-specific transporter. Major contributor to cysteine transport when cysteine, at low concentrations, is provided as the sole sulfur source. The protein is High affinity cysteine transporter (YCT1) of Saccharomyces cerevisiae (strain ATCC 204508 / S288c) (Baker's yeast).